The chain runs to 1378 residues: F-box protein At3g54460 (1378 aa).

Positions 65-96 (GDHDVENSGTIEDGRLETPQKRRKCVEGESSG) are enriched in basic and acidic residues. The tract at residues 65–113 (GDHDVENSGTIEDGRLETPQKRRKCVEGESSGKRKTPKSKRRVLSGSKE) is disordered. Positions 97–107 (KRKTPKSKRRV) are enriched in basic residues. The 47-residue stretch at 282 to 328 (VSGVWDLSDDVLISILMKLDTKDLFSIAAVCRLFRSLTSLIVPCMNL) folds into the F-box domain. The CW-type zinc-finger motif lies at 571–622 (DVESDIWMQCDSCSKWRRIIDEGVSVTGSAWFCSNNNDPAYQSCNDPEELWD). Residues Cys580, Cys583, Cys603, and Cys614 each contribute to the Zn(2+) site. Residues 720 to 885 (KWFYPKFLEN…LSHIQPLLKF (166 aa)) form the Helicase ATP-binding domain. Position 733-740 (733-740 (DVPALKVA)) interacts with ATP. The short motif at 834 to 837 (DEGH) is the DEAH box element. The 140-residue stretch at 1185 to 1324 (DCGSQMVFVD…DAEKSDRLLS (140 aa)) folds into the Helicase C-terminal domain.

Belongs to the helicase family.

In Arabidopsis thaliana (Mouse-ear cress), this protein is F-box protein At3g54460.